Reading from the N-terminus, the 352-residue chain is Photosystem II D2 protein (352 aa).

An N-acetylthreonine modification is found at T2. Position 2 is a phosphothreonine (T2). The helical transmembrane segment at 40 to 60 threads the bilayer; the sequence is TAYLALGGWLTGTTFVTSWYT. H117 serves as a coordination point for chlorophyll a. The chain crosses the membrane as a helical span at residues 124–140; the sequence is GFMLRQFEIARSVKLRP. Pheophytin a is bound by residues Q129 and N142. Residues 152 to 165 traverse the membrane as a helical segment; it reads VFVSVFLIYPLGQS. H197 contacts chlorophyll a. Residues 207-227 form a helical membrane-spanning segment; it reads AALLCAIHGATVENTLFEDGD. A plastoquinone contacts are provided by H214 and F261. H214 is a Fe cation binding site. H268 serves as a coordination point for Fe cation. Residues 278 to 294 form a helical membrane-spanning segment; it reads GLWMSALGVVGLALNLR.

It belongs to the reaction center PufL/M/PsbA/D family. In terms of assembly, PSII is composed of 1 copy each of membrane proteins PsbA, PsbB, PsbC, PsbD, PsbE, PsbF, PsbH, PsbI, PsbJ, PsbK, PsbL, PsbM, PsbT, PsbX, PsbY, PsbZ, Psb30/Ycf12, at least 3 peripheral proteins of the oxygen-evolving complex and a large number of cofactors. It forms dimeric complexes. Requires The D1/D2 heterodimer binds P680, chlorophylls that are the primary electron donor of PSII, and subsequent electron acceptors. It shares a non-heme iron and each subunit binds pheophytin, quinone, additional chlorophylls, carotenoids and lipids. There is also a Cl(-1) ion associated with D1 and D2, which is required for oxygen evolution. The PSII complex binds additional chlorophylls, carotenoids and specific lipids. as cofactor.

Its subcellular location is the plastid. It is found in the chloroplast thylakoid membrane. It catalyses the reaction 2 a plastoquinone + 4 hnu + 2 H2O = 2 a plastoquinol + O2. Photosystem II (PSII) is a light-driven water:plastoquinone oxidoreductase that uses light energy to abstract electrons from H(2)O, generating O(2) and a proton gradient subsequently used for ATP formation. It consists of a core antenna complex that captures photons, and an electron transfer chain that converts photonic excitation into a charge separation. The D1/D2 (PsbA/PsbD) reaction center heterodimer binds P680, the primary electron donor of PSII as well as several subsequent electron acceptors. D2 is needed for assembly of a stable PSII complex. This Pleurastrum terricola (Filamentous green alga) protein is Photosystem II D2 protein.